The following is a 356-amino-acid chain: MDANVLIMAGGTGGHVFPALACAREFQARGYKVHWLGTPRGIENELVPQAGLTLHLINVTGLRGKGRLSLLKAPFMLLKALMQARKVVRQVKPVCVVGFGGYVTGPGGLAAKLAGVPLIIHEQNAVAGTANRSLASFASRVCEAFPNTFAASSKRRTTGNPVRVELFLETPRQALTGRKARLLVLGGSLGAEPLNKLLPEALARLPQDIQPEVFHQSGKNHDAVTAERYRNVGVEAQVAPFIQNMAQAYSWADLVVCRAGALTISELAAAGLPSLLIPLPHAIDDHQSRNADYLAREGAAFVMPQATTGAAEMAARLKEVLMQPEQLNSMARTARSLAKPDATNTVVNVCVEVAHG.

UDP-N-acetyl-alpha-D-glucosamine is bound by residues 12–14, asparagine 124, arginine 163, serine 188, isoleucine 242, and glutamine 287; that span reads TGG.

It belongs to the glycosyltransferase 28 family. MurG subfamily.

The protein localises to the cell inner membrane. It carries out the reaction di-trans,octa-cis-undecaprenyl diphospho-N-acetyl-alpha-D-muramoyl-L-alanyl-D-glutamyl-meso-2,6-diaminopimeloyl-D-alanyl-D-alanine + UDP-N-acetyl-alpha-D-glucosamine = di-trans,octa-cis-undecaprenyl diphospho-[N-acetyl-alpha-D-glucosaminyl-(1-&gt;4)]-N-acetyl-alpha-D-muramoyl-L-alanyl-D-glutamyl-meso-2,6-diaminopimeloyl-D-alanyl-D-alanine + UDP + H(+). Its pathway is cell wall biogenesis; peptidoglycan biosynthesis. Cell wall formation. Catalyzes the transfer of a GlcNAc subunit on undecaprenyl-pyrophosphoryl-MurNAc-pentapeptide (lipid intermediate I) to form undecaprenyl-pyrophosphoryl-MurNAc-(pentapeptide)GlcNAc (lipid intermediate II). The sequence is that of UDP-N-acetylglucosamine--N-acetylmuramyl-(pentapeptide) pyrophosphoryl-undecaprenol N-acetylglucosamine transferase from Pseudomonas savastanoi pv. phaseolicola (strain 1448A / Race 6) (Pseudomonas syringae pv. phaseolicola (strain 1448A / Race 6)).